A 332-amino-acid polypeptide reads, in one-letter code: L-lactate dehydrogenase A chain (332 aa).

NAD(+) is bound by residues 29–57 (GAVG…VEDK) and arginine 99. Arginine 106, asparagine 138, and arginine 169 together coordinate substrate. Residue asparagine 138 participates in NAD(+) binding. The Proton acceptor role is filled by histidine 193. Threonine 248 serves as a coordination point for substrate.

The protein belongs to the LDH/MDH superfamily. LDH family. As to quaternary structure, homotetramer.

It is found in the cytoplasm. The enzyme catalyses (S)-lactate + NAD(+) = pyruvate + NADH + H(+). The protein operates within fermentation; pyruvate fermentation to lactate; (S)-lactate from pyruvate: step 1/1. Functionally, interconverts simultaneously and stereospecifically pyruvate and lactate with concomitant interconversion of NADH and NAD(+). The sequence is that of L-lactate dehydrogenase A chain (LDHA) from Python regius (Ball python).